Reading from the N-terminus, the 471-residue chain is Tryptophanase (471 aa).

Lys270 is subject to N6-(pyridoxal phosphate)lysine.

The protein belongs to the beta-eliminating lyase family. In terms of assembly, homotetramer. Requires pyridoxal 5'-phosphate as cofactor.

It catalyses the reaction L-tryptophan + H2O = indole + pyruvate + NH4(+). It functions in the pathway amino-acid degradation; L-tryptophan degradation via pyruvate pathway; indole and pyruvate from L-tryptophan: step 1/1. This is Tryptophanase from Histophilus somni (strain 129Pt) (Haemophilus somnus).